We begin with the raw amino-acid sequence, 236 residues long: Cytochrome c biogenesis ATP-binding export protein CcmA (236 aa).

In terms of domain architecture, ABC transporter spans 14–235 (LEATGLQVAR…SAGDRVTGTE (222 aa)). Residue 46 to 53 (GANGSGKT) coordinates ATP.

Belongs to the ABC transporter superfamily. CcmA exporter (TC 3.A.1.107) family. In terms of assembly, the complex is composed of two ATP-binding proteins (CcmA) and two transmembrane proteins (CcmB).

The protein localises to the cell inner membrane. It carries out the reaction heme b(in) + ATP + H2O = heme b(out) + ADP + phosphate + H(+). Its function is as follows. Part of the ABC transporter complex CcmAB involved in the biogenesis of c-type cytochromes; once thought to export heme, this seems not to be the case, but its exact role is uncertain. Responsible for energy coupling to the transport system. This is Cytochrome c biogenesis ATP-binding export protein CcmA from Alkalilimnicola ehrlichii (strain ATCC BAA-1101 / DSM 17681 / MLHE-1).